The sequence spans 732 residues: Lanosterol synthase (732 aa).

Thr-2 carries the post-translational modification N-acetylthreonine. PFTB repeat units follow at residues 77–121 (ALNG…PLPA), 124–165 (REEI…RILG), 424–468 (PDNP…LLLQ), 483–528 (LCDA…MIDY), 560–600 (LTQG…ACMG), 612–653 (VSRA…HNTC), and 670–712 (QERG…NIFP). Asp-455 (proton donor) is an active-site residue.

Belongs to the terpene cyclase/mutase family. In terms of assembly, monomer. Widely expressed. Expressed in the hair bulb, the outer root sheath and hair matrix of the hair follicle epithelium. Also detected in dermal papilla, epidermis, sweat glands, sebaceous glands, and blood vessels.

Its subcellular location is the endoplasmic reticulum membrane. The enzyme catalyses (S)-2,3-epoxysqualene = lanosterol. It functions in the pathway terpene metabolism; lanosterol biosynthesis; lanosterol from farnesyl diphosphate: step 3/3. In terms of biological role, key enzyme in the cholesterol biosynthesis pathway. Catalyzes the cyclization of (S)-2,3 oxidosqualene to lanosterol, a reaction that forms the sterol nucleus. Through the production of lanosterol may regulate lens protein aggregation and increase transparency. This chain is Lanosterol synthase (LSS), found in Homo sapiens (Human).